We begin with the raw amino-acid sequence, 782 residues long: Coiled-coil alpha-helical rod protein 1 (782 aa).

Basic and acidic residues-rich tracts occupy residues 62–74 and 208–218; these read ERDVSSDRQEPGR and ETRRAGEAKEL. 2 disordered regions span residues 62-82 and 182-218; these read ERDVSSDRQEPGRRGRSWGLE and LTQAHEEALSSLTSKAEGLEKSLSSLETRRAGEAKEL. Coiled coils occupy residues 82–314, 344–437, and 498–691; these read EGSQ…ELTR, LMVQ…NAVS, and VADV…QQEG.

It localises to the cytoplasm. Its subcellular location is the nucleus. Its function is as follows. May be a regulator of keratinocyte proliferation or differentiation. The polypeptide is Coiled-coil alpha-helical rod protein 1 (CCHCR1) (Pan paniscus (Pygmy chimpanzee)).